Consider the following 87-residue polypeptide: Putative phytosulfokines 4 (87 aa).

A signal peptide spans 1 to 23; sequence MANLSTLITIALLLCATMLTCSA. Positions 24–77 are excised as a propeptide; the sequence is RPEPAYFASFTTSPADTLSLEMIESKLHEVAGESCDKEDDEDCLVRRTLTAHLD. Residues tyrosine 78 and tyrosine 80 each carry the sulfotyrosine modification. Residues 83-87 constitute a propeptide that is removed on maturation; that stretch reads KNNHH.

The protein belongs to the phytosulfokine family. In terms of processing, sulfation is important for activity and for the binding to a putative membrane receptor.

The protein resides in the secreted. Promotes plant cell differentiation, organogenesis and somatic embryogenesis as well as cell proliferation. This chain is Putative phytosulfokines 4 (PSK4), found in Arabidopsis thaliana (Mouse-ear cress).